We begin with the raw amino-acid sequence, 394 residues long: Ceramide glucosyltransferase (394 aa).

Residues M1–G10 lie on the Lumenal side of the membrane. The chain crosses the membrane as a helical span at residues M11 to Y32. The Cytoplasmic segment spans residues T33 to R195. A short sequence motif (D1) is located at residue D92. An N6-acetyllysine modification is found at K117. Position 144 (D144) is a short sequence motif, D2. The chain crosses the membrane as a helical span at residues S196 to M215. Topologically, residues R216–T287 are lumenal. Residue D236 is a short sequence motif, D3. Catalysis depends on D236, which acts as the Proton acceptor. The short motif at R272–W276 is the (Q/R)XXRW element. Residues I288–G304 form a helical membrane-spanning segment. Topologically, residues W305–H309 are cytoplasmic. Residues V310–I328 traverse the membrane as a helical segment. Topologically, residues F329–D348 are lumenal. The helical transmembrane segment at Y349–W369 threads the bilayer. Over D370–V394 the chain is Cytoplasmic.

This sequence belongs to the glycosyltransferase 2 family. Interacts with RTN1; regulates the ceramide glucosyltransferase activity of UGCG.

It localises to the golgi apparatus membrane. The enzyme catalyses an N-acylsphing-4-enine + UDP-alpha-D-glucose = a beta-D-glucosyl-(1&lt;-&gt;1')-N-acylsphing-4-enine + UDP + H(+). The catalysed reaction is UDP-alpha-D-xylose + an N-acylsphing-4-enine = a beta-D-xylosyl-(1&lt;-&gt;1')-N-acylsphing-4-enine + UDP + H(+). It carries out the reaction N-(9Z-octadecenoyl)-sphing-4-enine + UDP-alpha-D-xylose = beta-D-xylosyl-(1&lt;-&gt;1')-N-(9Z-octadecenoyl)-sphing-4-enine + UDP + H(+). Its pathway is lipid metabolism; sphingolipid metabolism. Participates in the initial step of the glucosylceramide-based glycosphingolipid/GSL synthetic pathway at the cytosolic surface of the Golgi. Catalyzes the transfer of glucose from UDP-glucose to ceramide to produce glucosylceramide/GlcCer (such as beta-D-glucosyl-(1&lt;-&gt;1')-N-acylsphing-4-enine). Glucosylceramide is the core component of glycosphingolipids/GSLs, amphipathic molecules consisting of a ceramide lipid moiety embedded in the outer leaflet of the membrane, linked to one of hundreds of different externally oriented oligosaccharide structures. Glycosphingolipids are essential components of membrane microdomains that mediate membrane trafficking and signal transduction. They are implicated in many fundamental cellular processes, including growth, differentiation, migration, morphogenesis, cell-to-cell and cell-to-matrix interactions. They are required for instance in the proper development and functioning of the nervous system. As an example of their role in signal transduction, they regulate the leptin receptor/LEPR in the leptin-mediated signaling pathway. They also play an important role in the establishment of the skin barrier regulating keratinocyte differentiation and the proper assembly of the cornified envelope. The biosynthesis of GSLs is also required for the proper intestinal endocytic uptake of nutritional lipids. Catalyzes the synthesis of xylosylceramide/XylCer (such as beta-D-xylosyl-(1&lt;-&gt;1')-N-acylsphing-4-enine) using UDP-Xyl as xylose donor. The chain is Ceramide glucosyltransferase from Mus musculus (Mouse).